Consider the following 105-residue polypeptide: Small ribosomal subunit protein uS10 (105 aa).

The protein belongs to the universal ribosomal protein uS10 family. As to quaternary structure, part of the 30S ribosomal subunit.

Involved in the binding of tRNA to the ribosomes. This is Small ribosomal subunit protein uS10 from Agathobacter rectalis (strain ATCC 33656 / DSM 3377 / JCM 17463 / KCTC 5835 / VPI 0990) (Eubacterium rectale).